Reading from the N-terminus, the 358-residue chain is Dual-specificity RNA methyltransferase RlmN (358 aa).

Residue Glu86 is the Proton acceptor of the active site. One can recognise a Radical SAM core domain in the interval 105 to 338 (RHKRYTICVS…CTIRQSKGLD (234 aa)). Cys112 and Cys343 are joined by a disulfide. [4Fe-4S] cluster-binding residues include Cys119, Cys123, and Cys126. S-adenosyl-L-methionine is bound by residues 169–170 (GE), Ser201, 224–226 (SLH), and Asn300. The S-methylcysteine intermediate role is filled by Cys343.

Belongs to the radical SAM superfamily. RlmN family. Requires [4Fe-4S] cluster as cofactor.

The protein resides in the cytoplasm. It catalyses the reaction adenosine(2503) in 23S rRNA + 2 reduced [2Fe-2S]-[ferredoxin] + 2 S-adenosyl-L-methionine = 2-methyladenosine(2503) in 23S rRNA + 5'-deoxyadenosine + L-methionine + 2 oxidized [2Fe-2S]-[ferredoxin] + S-adenosyl-L-homocysteine. It carries out the reaction adenosine(37) in tRNA + 2 reduced [2Fe-2S]-[ferredoxin] + 2 S-adenosyl-L-methionine = 2-methyladenosine(37) in tRNA + 5'-deoxyadenosine + L-methionine + 2 oxidized [2Fe-2S]-[ferredoxin] + S-adenosyl-L-homocysteine. In terms of biological role, specifically methylates position 2 of adenine 2503 in 23S rRNA and position 2 of adenine 37 in tRNAs. m2A2503 modification seems to play a crucial role in the proofreading step occurring at the peptidyl transferase center and thus would serve to optimize ribosomal fidelity. The chain is Dual-specificity RNA methyltransferase RlmN from Campylobacter hominis (strain ATCC BAA-381 / DSM 21671 / CCUG 45161 / LMG 19568 / NCTC 13146 / CH001A).